Here is a 77-residue protein sequence, read N- to C-terminus: U8-lycotoxin-Ls1d (77 aa).

The N-terminal stretch at 1 to 20 (MKLIIFTGLVLFAIVSLIEA) is a signal peptide. A propeptide spanning residues 21–26 (QAENEK) is cleaved from the precursor.

This sequence belongs to the neurotoxin 19 (CSTX) family. 08 (U8-Lctx) subfamily. Post-translationally, contains 4 disulfide bonds. Expressed by the venom gland.

The protein localises to the secreted. This is U8-lycotoxin-Ls1d from Lycosa singoriensis (Wolf spider).